The primary structure comprises 42 residues: Potassium channel toxin gamma-KTx 1.4 (42 aa).

Cystine bridges form between cysteine 5-cysteine 23, cysteine 11-cysteine 34, cysteine 20-cysteine 39, and cysteine 24-cysteine 41.

The protein belongs to the ergtoxin family. Gamma-KTx 1 subfamily. In terms of tissue distribution, expressed by the venom gland.

Its subcellular location is the secreted. In terms of biological role, blocks Kv11/ERG potassium channels. The polypeptide is Potassium channel toxin gamma-KTx 1.4 (Centruroides sculpturatus (Arizona bark scorpion)).